A 324-amino-acid polypeptide reads, in one-letter code: Lactonase drp35 (324 aa).

Residues Glu-47, Ser-109, Gly-111, Asp-129, Thr-132, Tyr-134, Asp-137, Asn-184, Asp-235, and Ser-236 each coordinate Ca(2+). Asp-235 acts as the Proton donor in catalysis.

Belongs to the SMP-30/CGR1 family. Ca(2+) is required as a cofactor.

The protein localises to the cytoplasm. Exhibits lactonase activity. Acts in cells with perturbed membrane integrity and is possibly related to the membrane homeostasis. The protein is Lactonase drp35 (drp35) of Staphylococcus aureus (strain bovine RF122 / ET3-1).